Reading from the N-terminus, the 970-residue chain is UvrABC system protein A (970 aa).

Position 34 to 41 (34 to 41) interacts with ATP; sequence GVSGSGKS. The C4-type zinc finger occupies 284–311; that stretch reads CPEHGAVMDELSPRLFSFNSPYGACPDC. ABC transporter domains are found at residues 340 to 617 and 637 to 965; these read WSEK…QRSL and GNGA…KYLA. Position 669-676 (669-676) interacts with ATP; it reads GVSGSGKS. A C4-type zinc finger spans residues 768–794; the sequence is CEACAGQGVNVIEMNFLPDVYVQCDVC.

The protein belongs to the ABC transporter superfamily. UvrA family. As to quaternary structure, forms a heterotetramer with UvrB during the search for lesions.

The protein localises to the cytoplasm. Functionally, the UvrABC repair system catalyzes the recognition and processing of DNA lesions. UvrA is an ATPase and a DNA-binding protein. A damage recognition complex composed of 2 UvrA and 2 UvrB subunits scans DNA for abnormalities. When the presence of a lesion has been verified by UvrB, the UvrA molecules dissociate. This is UvrABC system protein A from Synechocystis sp. (strain ATCC 27184 / PCC 6803 / Kazusa).